Reading from the N-terminus, the 370-residue chain is Queuine tRNA-ribosyltransferase (370 aa).

The active-site Proton acceptor is Asp-89. Residues 89-93 (DSGGF), Asp-143, Gln-185, and Gly-212 each bind substrate. Residues 243–249 (GVGTPED) form an RNA binding region. The Nucleophile role is filled by Asp-262. An RNA binding; important for wobble base 34 recognition region spans residues 267 to 271 (TRNAR). Positions 300, 302, 305, and 331 each coordinate Zn(2+).

Belongs to the queuine tRNA-ribosyltransferase family. In terms of assembly, homodimer. Within each dimer, one monomer is responsible for RNA recognition and catalysis, while the other monomer binds to the replacement base PreQ1. Zn(2+) is required as a cofactor.

It carries out the reaction 7-aminomethyl-7-carbaguanine + guanosine(34) in tRNA = 7-aminomethyl-7-carbaguanosine(34) in tRNA + guanine. Its pathway is tRNA modification; tRNA-queuosine biosynthesis. Its function is as follows. Catalyzes the base-exchange of a guanine (G) residue with the queuine precursor 7-aminomethyl-7-deazaguanine (PreQ1) at position 34 (anticodon wobble position) in tRNAs with GU(N) anticodons (tRNA-Asp, -Asn, -His and -Tyr). Catalysis occurs through a double-displacement mechanism. The nucleophile active site attacks the C1' of nucleotide 34 to detach the guanine base from the RNA, forming a covalent enzyme-RNA intermediate. The proton acceptor active site deprotonates the incoming PreQ1, allowing a nucleophilic attack on the C1' of the ribose to form the product. After dissociation, two additional enzymatic reactions on the tRNA convert PreQ1 to queuine (Q), resulting in the hypermodified nucleoside queuosine (7-(((4,5-cis-dihydroxy-2-cyclopenten-1-yl)amino)methyl)-7-deazaguanosine). This Methylobacillus flagellatus (strain ATCC 51484 / DSM 6875 / VKM B-1610 / KT) protein is Queuine tRNA-ribosyltransferase.